The following is a 184-amino-acid chain: GTP cyclohydrolase 1 (184 aa).

Cys75, His78, and Cys146 together coordinate Zn(2+).

Belongs to the GTP cyclohydrolase I family. As to quaternary structure, homomer.

It carries out the reaction GTP + H2O = 7,8-dihydroneopterin 3'-triphosphate + formate + H(+). It functions in the pathway cofactor biosynthesis; 7,8-dihydroneopterin triphosphate biosynthesis; 7,8-dihydroneopterin triphosphate from GTP: step 1/1. This Finegoldia magna (strain ATCC 29328 / DSM 20472 / WAL 2508) (Peptostreptococcus magnus) protein is GTP cyclohydrolase 1.